The following is a 351-amino-acid chain: Photosystem II D2 protein (351 aa).

Residues 39 to 59 (TAYLAVGGWMTGTTFVTSWYT) form a helical membrane-spanning segment. Histidine 116 provides a ligand contact to chlorophyll a. Residues 123–139 (GFCLRQFEIARLVGIRP) traverse the membrane as a helical segment. Positions 128 and 141 each coordinate pheophytin a. The helical transmembrane segment at 151–164 (VFVSVFLLYPLGQA) threads the bilayer. A chlorophyll a-binding site is contributed by histidine 196. A helical transmembrane segment spans residues 206–226 (GALLCAIHGATVENTLFEDGD). Residues histidine 213 and phenylalanine 260 each coordinate a plastoquinone. Histidine 213 serves as a coordination point for Fe cation. Position 267 (histidine 267) interacts with Fe cation. Residues 277–293 (GLWTSAIGIVGLALNLR) traverse the membrane as a helical segment.

The protein belongs to the reaction center PufL/M/PsbA/D family. As to quaternary structure, PSII is composed of 1 copy each of membrane proteins PsbA, PsbB, PsbC, PsbD, PsbE, PsbF, PsbH, PsbI, PsbJ, PsbK, PsbL, PsbM, PsbT, PsbX, PsbY, PsbZ, Psb30/Ycf12, at least 3 peripheral proteins of the oxygen-evolving complex and a large number of cofactors. It forms dimeric complexes. The D1/D2 heterodimer binds P680, chlorophylls that are the primary electron donor of PSII, and subsequent electron acceptors. It shares a non-heme iron and each subunit binds pheophytin, quinone, additional chlorophylls, carotenoids and lipids. There is also a Cl(-1) ion associated with D1 and D2, which is required for oxygen evolution. The PSII complex binds additional chlorophylls, carotenoids and specific lipids. is required as a cofactor.

It localises to the plastid. The protein resides in the chloroplast thylakoid membrane. The enzyme catalyses 2 a plastoquinone + 4 hnu + 2 H2O = 2 a plastoquinol + O2. Functionally, photosystem II (PSII) is a light-driven water:plastoquinone oxidoreductase that uses light energy to abstract electrons from H(2)O, generating O(2) and a proton gradient subsequently used for ATP formation. It consists of a core antenna complex that captures photons, and an electron transfer chain that converts photonic excitation into a charge separation. The D1/D2 (PsbA/PsbD) reaction center heterodimer binds P680, the primary electron donor of PSII as well as several subsequent electron acceptors. D2 is needed for assembly of a stable PSII complex. The protein is Photosystem II D2 protein of Phaeodactylum tricornutum (strain CCAP 1055/1).